Consider the following 156-residue polypeptide: Small ribosomal subunit protein uS7 (156 aa).

It belongs to the universal ribosomal protein uS7 family. Part of the 30S ribosomal subunit. Contacts proteins S9 and S11.

Its function is as follows. One of the primary rRNA binding proteins, it binds directly to 16S rRNA where it nucleates assembly of the head domain of the 30S subunit. Is located at the subunit interface close to the decoding center, probably blocks exit of the E-site tRNA. The polypeptide is Small ribosomal subunit protein uS7 (Mycoplasma mobile (strain ATCC 43663 / 163K / NCTC 11711) (Mesomycoplasma mobile)).